Consider the following 277-residue polypeptide: MSVINVGQAVVLGAVEGVTEFLPVSSTGHLKITEGLMGIPVDDNAVVGFSAVIQVGAIAAVLVYFFKDIVRIVSAWGRGLRNRDERHHHDYKFAWWVIYATIPIVIVGLAAKSLIEGPLASLWVVAASLIVGSGVMWAADQMGRHKRGEDDTSFKDAMLVGSSQILALLFPGFSRSGATMSTALILDLDRVAATRLSFFLGIPALTGAGLYELKDALGTGVGVAPLAVGTIVSFVVAYGSISWLLKFVAKHSFNAFVIYRIVIGVLLLGLLGTGVLS.

7 helical membrane-spanning segments follow: residues Val-46–Phe-66, Trp-95–Ile-115, Leu-119–Ala-139, Ile-165–Ile-185, Val-191–Tyr-211, Ala-216–Val-236, and Phe-256–Leu-276.

The protein belongs to the UppP family.

The protein localises to the cell membrane. The catalysed reaction is di-trans,octa-cis-undecaprenyl diphosphate + H2O = di-trans,octa-cis-undecaprenyl phosphate + phosphate + H(+). Its function is as follows. Catalyzes the dephosphorylation of undecaprenyl diphosphate (UPP). Confers resistance to bacitracin. The polypeptide is Undecaprenyl-diphosphatase 1 (Streptomyces avermitilis (strain ATCC 31267 / DSM 46492 / JCM 5070 / NBRC 14893 / NCIMB 12804 / NRRL 8165 / MA-4680)).